The chain runs to 324 residues: 4-hydroxybenzoyl-CoA reductase subunit beta (324 aa).

Residues 2-217 enclose the FAD-binding PCMH-type domain; the sequence is NILTDFRTHR…AAIEVPPTGA (216 aa). FAD is bound by residues 29 to 36, T111, N115, and Q118; that span reads PLGAGTDL. Positions 122, 138, 146, and 155 each coordinate [4Fe-4S] cluster. Residues D162 and K224 each contribute to the FAD site.

In terms of assembly, heterohexamer of two alpha, two beta and two gamma subunits. Requires FAD as cofactor. [4Fe-4S] cluster is required as a cofactor.

The catalysed reaction is oxidized 2[4Fe-4S]-[ferredoxin] + benzoyl-CoA + H2O = 4-hydroxybenzoyl-CoA + reduced 2[4Fe-4S]-[ferredoxin] + 2 H(+). Its activity is regulated as follows. Inactivated by low concentrations of cyanide in vitro. Component of a complex that catalyzes the reductive dehydroxylation of 4-hydroxybenzoyl-CoA to benzoyl-CoA. Reaction is not reversible. Is a key enzyme in the anaerobic degradation of phenolic compounds. This chain is 4-hydroxybenzoyl-CoA reductase subunit beta (hcrB), found in Thauera aromatica.